We begin with the raw amino-acid sequence, 583 residues long: Aspartate--tRNA ligase (583 aa).

L-aspartate is bound at residue Glu-174. The segment at 198–201 (QITK) is aspartate. Arg-220 serves as a coordination point for L-aspartate. Residues 220–222 (RDE) and Gln-229 each bind ATP. His-443 contributes to the L-aspartate binding site. Glu-477 is an ATP binding site. Arg-484 serves as a coordination point for L-aspartate. ATP is bound at residue 529–532 (GLDR).

The protein belongs to the class-II aminoacyl-tRNA synthetase family. Type 1 subfamily. Homodimer.

It is found in the cytoplasm. The catalysed reaction is tRNA(Asp) + L-aspartate + ATP = L-aspartyl-tRNA(Asp) + AMP + diphosphate. Its function is as follows. Catalyzes the attachment of L-aspartate to tRNA(Asp) in a two-step reaction: L-aspartate is first activated by ATP to form Asp-AMP and then transferred to the acceptor end of tRNA(Asp). The protein is Aspartate--tRNA ligase of Streptococcus agalactiae serotype Ia (strain ATCC 27591 / A909 / CDC SS700).